A 37-amino-acid polypeptide reads, in one-letter code: MKIRASVRKICENCRLIRRRRRIMVVCSNPKHKQRQG.

This sequence belongs to the bacterial ribosomal protein bL36 family.

The protein resides in the plastid. The protein localises to the chloroplast. This chain is Large ribosomal subunit protein bL36c (rpl36), found in Marchantia polymorpha (Common liverwort).